The primary structure comprises 33 residues: uncharacterized protein (33 aa).

Residues 1–33 (MGSVIKKRRKRMSKKKHRKLLRRTRVQRRKLGK) are disordered.

This is an uncharacterized protein from Mycobacterium tuberculosis (strain CDC 1551 / Oshkosh).